A 275-amino-acid chain; its full sequence is Ditrans,polycis-undecaprenyl-diphosphate synthase ((2E,6E)-farnesyl-diphosphate specific) (275 aa).

Residue Asp45 is part of the active site. Residue Asp45 participates in Mg(2+) binding. Substrate is bound by residues 46 to 49 (GNGR), Trp50, Arg58, His62, and 90 to 92 (SSE). The active-site Proton acceptor is Asn93. Residues Trp94, Arg96, Arg213, and 219–221 (RIS) contribute to the substrate site. Residue Glu232 participates in Mg(2+) binding.

The protein belongs to the UPP synthase family. Homodimer. It depends on Mg(2+) as a cofactor.

The enzyme catalyses 8 isopentenyl diphosphate + (2E,6E)-farnesyl diphosphate = di-trans,octa-cis-undecaprenyl diphosphate + 8 diphosphate. In terms of biological role, catalyzes the sequential condensation of isopentenyl diphosphate (IPP) with (2E,6E)-farnesyl diphosphate (E,E-FPP) to yield (2Z,6Z,10Z,14Z,18Z,22Z,26Z,30Z,34E,38E)-undecaprenyl diphosphate (di-trans,octa-cis-UPP). UPP is the precursor of glycosyl carrier lipid in the biosynthesis of bacterial cell wall polysaccharide components such as peptidoglycan and lipopolysaccharide. This Shewanella oneidensis (strain ATCC 700550 / JCM 31522 / CIP 106686 / LMG 19005 / NCIMB 14063 / MR-1) protein is Ditrans,polycis-undecaprenyl-diphosphate synthase ((2E,6E)-farnesyl-diphosphate specific).